The sequence spans 287 residues: Large ribosomal subunit protein uL2 (287 aa).

The tract at residues Arg-216 to Ala-287 is disordered. A compositionally biased stretch (basic residues) spans Gln-271–Ala-287.

Belongs to the universal ribosomal protein uL2 family. As to quaternary structure, part of the 50S ribosomal subunit. Forms a bridge to the 30S subunit in the 70S ribosome.

One of the primary rRNA binding proteins. Required for association of the 30S and 50S subunits to form the 70S ribosome, for tRNA binding and peptide bond formation. It has been suggested to have peptidyltransferase activity; this is somewhat controversial. Makes several contacts with the 16S rRNA in the 70S ribosome. In Synechococcus sp. (strain ATCC 27144 / PCC 6301 / SAUG 1402/1) (Anacystis nidulans), this protein is Large ribosomal subunit protein uL2.